Consider the following 1041-residue polypeptide: Probable rhamnogalacturonate lyase C (1041 aa).

An N-terminal signal peptide occupies residues 1–21 (MFASTLRKTFVFLGLATYSAA). N-linked (GlcNAc...) asparagine glycosylation is found at Asn28, Asn94, Asn116, Asn142, Asn231, Asn283, Asn528, and Asn634. Residues 703 to 728 (ISRPCPRKGGTRRRKKERKKEGKKQG) form a disordered region. Residues 707 to 720 (CPRKGGTRRRKKER) are compositionally biased toward basic residues. Residue Asn864 is glycosylated (N-linked (GlcNAc...) asparagine).

The protein belongs to the polysaccharide lyase 4 family.

Its subcellular location is the secreted. It carries out the reaction Endotype eliminative cleavage of L-alpha-rhamnopyranosyl-(1-&gt;4)-alpha-D-galactopyranosyluronic acid bonds of rhamnogalacturonan I domains in ramified hairy regions of pectin leaving L-rhamnopyranose at the reducing end and 4-deoxy-4,5-unsaturated D-galactopyranosyluronic acid at the non-reducing end.. Functionally, pectinolytic enzymes consist of four classes of enzymes: pectin lyase, polygalacturonase, pectin methylesterase and rhamnogalacturonase. Degrades the rhamnogalacturonan I (RG-I) backbone of pectin. The chain is Probable rhamnogalacturonate lyase C (rglC) from Emericella nidulans (strain FGSC A4 / ATCC 38163 / CBS 112.46 / NRRL 194 / M139) (Aspergillus nidulans).